The chain runs to 475 residues: Probable phenylalanine--tRNA ligase alpha subunit (475 aa).

Residues 2–151 (TAVAQKIIEN…KRKLVSRRKK (150 aa)) are contains the major tRNA-Phe binding sites. L-phenylalanine-binding positions include threonine 309, 351–353 (QVE), and tyrosine 391. Glutamate 393 is a Mg(2+) binding site. Position 417 (phenylalanine 417) interacts with L-phenylalanine.

It belongs to the class-II aminoacyl-tRNA synthetase family. Phe-tRNA synthetase alpha subunit type 2 subfamily. In terms of assembly, tetramer of two alpha and two beta subunits. The cofactor is Mg(2+).

Its subcellular location is the cytoplasm. The enzyme catalyses tRNA(Phe) + L-phenylalanine + ATP = L-phenylalanyl-tRNA(Phe) + AMP + diphosphate + H(+). The protein is Probable phenylalanine--tRNA ligase alpha subunit of Encephalitozoon cuniculi (strain GB-M1) (Microsporidian parasite).